Reading from the N-terminus, the 530-residue chain is Cytochrome P450 monooxygenase ausG (530 aa).

The chain crosses the membrane as a helical span at residues 31 to 51 (LLVAYRLPGLLLLFSITIILF). Cys-470 is a binding site for heme.

This sequence belongs to the cytochrome P450 family. Requires heme as cofactor.

Its subcellular location is the membrane. It functions in the pathway secondary metabolite biosynthesis; terpenoid biosynthesis. In terms of biological role, cytochrome P450 monooxygenase; part of the gene cluster B that mediates the biosynthesis of the fungal meroterpenoid acetoxydehydroaustin. The first step of the pathway is the synthesis of 3,5-dimethylorsellinic acid by the polyketide synthase ausA. 3,5-dimethylorsellinic acid is then prenylated by the polyprenyl transferase ausN. Further epoxidation by the FAD-dependent monooxygenase ausM and cyclization by the probable terpene cyclase ausL lead to the formation of protoaustinoid A. Protoaustinoid A is then oxidized to spiro-lactone preaustinoid A3 by the combined action of the FAD-binding monooxygenases ausB and ausC, and the dioxygenase ausE. Acid-catalyzed keto-rearrangement and ring contraction of the tetraketide portion of preaustinoid A3 by ausJ lead to the formation of preaustinoid A4. The aldo-keto reductase ausK, with the help of ausH, is involved in the next step by transforming preaustinoid A4 into isoaustinone which is in turn hydroxylated by the P450 monooxygenase ausI to form austinolide. The cytochrome P450 monooxygenase ausG then modifies austinolide to austinol. Austinol is further acetylated to austin by the O-acetyltransferase ausP, which spontaneously changes to dehydroaustin. The cytochrome P450 monooxygenase then converts dehydroaustin is into 7-dehydrodehydroaustin. The hydroxylation catalyzed by ausR permits the second O-acetyltransferase ausQ to add an additional acetyl group to the molecule, leading to the formation of acetoxydehydroaustin. Due to genetic rearrangements of the clusters and the subsequent loss of some enzymes, the end product of the Penicillium brasilianum austinoid biosynthesis clusters is acetoxydehydroaustin. This is Cytochrome P450 monooxygenase ausG from Penicillium brasilianum.